Here is a 273-residue protein sequence, read N- to C-terminus: Undecaprenyl-diphosphatase (273 aa).

Transmembrane regions (helical) follow at residues 6-26, 45-65, 90-110, 116-136, 190-210, 222-242, and 252-272; these read SLLI…LPVS, AKTF…VMFW, LTLI…LLFH, LFNP…LIAA, YAAS…ATAL, GDIP…LIAI, and ISFI…YVVF.

This sequence belongs to the UppP family.

It localises to the cell inner membrane. The catalysed reaction is di-trans,octa-cis-undecaprenyl diphosphate + H2O = di-trans,octa-cis-undecaprenyl phosphate + phosphate + H(+). Functionally, catalyzes the dephosphorylation of undecaprenyl diphosphate (UPP). Confers resistance to bacitracin. The protein is Undecaprenyl-diphosphatase of Escherichia coli O7:K1 (strain IAI39 / ExPEC).